The following is a 306-amino-acid chain: D-alanine--D-alanine ligase B (306 aa).

Residues Glu15 and Ser150 contribute to the active site. The ATP-grasp domain occupies 101–303 (KLLWQGAGLP…FSQLVVRILE (203 aa)). 134 to 189 (ISALGLPVIVKPSREGSSVGMSKVVAENALQDALRLAFQHDEEVLIEKWLSGPEFT) contributes to the ATP binding site. Mg(2+)-binding residues include Asp257, Glu270, and Asn272. Ser281 is an active-site residue.

The protein belongs to the D-alanine--D-alanine ligase family. Monomer. Requires Mg(2+) as cofactor. Mn(2+) is required as a cofactor.

The protein resides in the cytoplasm. The catalysed reaction is 2 D-alanine + ATP = D-alanyl-D-alanine + ADP + phosphate + H(+). It participates in cell wall biogenesis; peptidoglycan biosynthesis. In terms of biological role, cell wall formation. This chain is D-alanine--D-alanine ligase B (ddlB), found in Escherichia coli O157:H7.